A 121-amino-acid polypeptide reads, in one-letter code: Chorion class CA protein ERA.4 (121 aa).

Positions 1 to 23 (MSSSFFCFFLFCFQTCLIQNVYS) are cleaved as a signal peptide. A left arm region spans residues 24 to 57 (QCLGRVGPGGPPLGPYGGPLGGPGYGPVGYGGCG). The tract at residues 58–105 (GYGGSGIGNVAVAGELPVAGSAAVLGQVPVIGAVEFAGPACAVGSVSI) is central domain. The right arm stretch occupies residues 106-121 (SGACGPTCGCGGSPYY).

It belongs to the chorion protein family.

This protein is one of many from the eggshell of the silk moth. This is Chorion class CA protein ERA.4 (ERA.4) from Bombyx mori (Silk moth).